Consider the following 517-residue polypeptide: Glycerol kinase (517 aa).

ADP is bound at residue Thr24. ATP contacts are provided by Thr24, Thr25, and Ser26. Position 24 (Thr24) interacts with sn-glycerol 3-phosphate. ADP is bound at residue Arg28. Sn-glycerol 3-phosphate contacts are provided by Arg94, Glu95, Tyr146, and Asp261. Residues Arg94, Glu95, Tyr146, Asp261, and Gln262 each coordinate glycerol. The ADP site is built by Thr283 and Gly327. ATP is bound by residues Thr283, Gly327, Gln331, and Gly428. ADP-binding residues include Gly428 and Asn432.

Belongs to the FGGY kinase family.

It catalyses the reaction glycerol + ATP = sn-glycerol 3-phosphate + ADP + H(+). Its pathway is polyol metabolism; glycerol degradation via glycerol kinase pathway; sn-glycerol 3-phosphate from glycerol: step 1/1. Inhibited by fructose 1,6-bisphosphate (FBP). In terms of biological role, key enzyme in the regulation of glycerol uptake and metabolism. Catalyzes the phosphorylation of glycerol to yield sn-glycerol 3-phosphate. In Mycobacterium tuberculosis (strain ATCC 25177 / H37Ra), this protein is Glycerol kinase.